The following is a 43-amino-acid chain: Protein PsbN (43 aa).

The helical transmembrane segment at 4 to 24 threads the bilayer; it reads ATIIVIFVSSLLVGITAYSVY.

This sequence belongs to the PsbN family.

It is found in the plastid. The protein localises to the chloroplast thylakoid membrane. In terms of biological role, may play a role in photosystem I and II biogenesis. This Thalassiosira pseudonana (Marine diatom) protein is Protein PsbN.